We begin with the raw amino-acid sequence, 264 residues long: uncharacterized protein (264 aa).

The disordered stretch occupies residues 1 to 20; it reads MENIEKKCQPETINEDNNDE.

Belongs to the mimivirus R73/L269/L862 family.

This is an uncharacterized protein from Acanthamoeba polyphaga mimivirus (APMV).